The primary structure comprises 971 residues: Exportin-2 (971 aa).

Met1 carries the N-acetylmethionine modification. The 74-residue stretch at 29–102 (AEKFLESVEG…KANIVHLMLS (74 aa)) folds into the Importin N-terminal domain. A Phosphoserine modification is found at Ser112. 2 positions are modified to N6-acetyllysine: Lys574 and Lys824. Ser931 is modified (phosphoserine).

This sequence belongs to the XPO2/CSE1 family. Found in a complex with CSE1L/XPO2, Ran and KPNA2. Binds with high affinity to importin-alpha only in the presence of RanGTP. The complex is dissociated by the combined action of RanBP1 and RanGAP1. Interacts with CFTR.

It is found in the cytoplasm. The protein resides in the nucleus. Functionally, export receptor for importin-alpha. Mediates importin-alpha re-export from the nucleus to the cytoplasm after import substrates (cargos) have been released into the nucleoplasm. In the nucleus binds cooperatively to importin-alpha and to the GTPase Ran in its active GTP-bound form. Docking of this trimeric complex to the nuclear pore complex (NPC) is mediated through binding to nucleoporins. Upon transit of a nuclear export complex into the cytoplasm, disassembling of the complex and hydrolysis of Ran-GTP to Ran-GDP (induced by RANBP1 and RANGAP1, respectively) cause release of the importin-alpha from the export receptor. CSE1L/XPO2 then return to the nuclear compartment and mediate another round of transport. The directionality of nuclear export is thought to be conferred by an asymmetric distribution of the GTP- and GDP-bound forms of Ran between the cytoplasm and nucleus. This chain is Exportin-2 (CSE1L), found in Bos taurus (Bovine).